We begin with the raw amino-acid sequence, 75 residues long: Kappa-conotoxin RIIIK (75 aa).

A signal peptide spans 1-19 (MSKLGVLLTICLLLFPLTA). A propeptide spanning residues 20–50 (LPMDGDQPVDRLAERMQDNISSEQHTFFEKR) is cleaved from the precursor. Pro-52, Pro-63, Pro-65, and Pro-71 each carry 4-hydroxyproline. Disulfide bonds link Cys-54-Cys-67, Cys-55-Cys-72, and Cys-62-Cys-73. Residue Thr-74 is modified to Threonine amide.

This sequence belongs to the conotoxin M superfamily. As to expression, expressed by the venom duct.

The protein resides in the secreted. Kappa-conotoxins inhibits voltage-gated potassium channels (Kv). This synthetic toxin reversibly inhibits the insect potassium channel Shaker K+, the teleost homolog TSha1 and the mammalian Kv1.2/KCNA2 channel. Interacts with the pore region of the insect channel, in a state-dependent manner. Causes seizure when intracerebrovascularly injected into mice. Is also toxic when intrathecally injected into mice, but shows no visible effects by intraperitoneal injection. Shows protective effects on cardiac tissue when administered after an ischemic event. The chain is Kappa-conotoxin RIIIK from Conus radiatus (Rayed cone).